The primary structure comprises 617 residues: V-type proton ATPase catalytic subunit A (617 aa).

257–264 (GAFGCGKT) contacts ATP.

This sequence belongs to the ATPase alpha/beta chains family. As to quaternary structure, V-ATPase is a heteromultimeric enzyme composed of a peripheral catalytic V1 complex (components A to H) attached to an integral membrane V0 proton pore complex (components: a, c, c', c'', d, e, f and VOA1).

The protein resides in the vacuole membrane. It carries out the reaction ATP + H2O + 4 H(+)(in) = ADP + phosphate + 5 H(+)(out). In terms of biological role, catalytic subunit of the V1 complex of vacuolar(H+)-ATPase (V-ATPase), a multisubunit enzyme composed of a peripheral complex (V1) that hydrolyzes ATP and a membrane integral complex (V0) that translocates protons. V-ATPase is responsible for acidifying and maintaining the pH of intracellular compartments. The chain is V-type proton ATPase catalytic subunit A (VMA1) from Eremothecium gossypii (strain ATCC 10895 / CBS 109.51 / FGSC 9923 / NRRL Y-1056) (Yeast).